A 211-amino-acid polypeptide reads, in one-letter code: MTAAASTLALNLARKLYETGIRSQSVLSAVANTPRELFLDNALAHKAYENTALPIGQGQTISQPYIVARMTELLLQTQPNKVLEIGTGSGYQAAILAQLVPQLCTIERIKALQIQARQRLKRLDLHNVSFKYGDGWQGWHNKGPFDGILVTAAASKVPEALLAQLSDGGVLLIPVGEDAQQLLKITRTGQSFESQIIEAVKFVPLINGELA.

The active site involves Ser62.

It belongs to the methyltransferase superfamily. L-isoaspartyl/D-aspartyl protein methyltransferase family.

It is found in the cytoplasm. It catalyses the reaction [protein]-L-isoaspartate + S-adenosyl-L-methionine = [protein]-L-isoaspartate alpha-methyl ester + S-adenosyl-L-homocysteine. Functionally, catalyzes the methyl esterification of L-isoaspartyl residues in peptides and proteins that result from spontaneous decomposition of normal L-aspartyl and L-asparaginyl residues. It plays a role in the repair and/or degradation of damaged proteins. The polypeptide is Protein-L-isoaspartate O-methyltransferase (Shewanella denitrificans (strain OS217 / ATCC BAA-1090 / DSM 15013)).